The sequence spans 437 residues: Ribulose bisphosphate carboxylase-like protein (437 aa).

Lys176 serves as the catalytic Proton acceptor. Positions 202, 204, and 205 each coordinate Mg(2+). Position 202 is an N6-carboxylysine (Lys202). His293 (proton acceptor) is an active-site residue.

This sequence belongs to the RuBisCO large chain family. Type IV subfamily. Homodimer. It depends on Mg(2+) as a cofactor.

In terms of biological role, may be involved in sulfur metabolism and oxidative stress response. Does not show RuBisCO activity. This Archaeoglobus fulgidus (strain ATCC 49558 / DSM 4304 / JCM 9628 / NBRC 100126 / VC-16) protein is Ribulose bisphosphate carboxylase-like protein.